Reading from the N-terminus, the 599-residue chain is Elongation factor 4 (599 aa).

Positions 2 to 184 (KNIRNFSIIA…EIVAKIPAPK (183 aa)) constitute a tr-type G domain. GTP contacts are provided by residues 14–19 (DHGKST) and 131–134 (NKID).

Belongs to the TRAFAC class translation factor GTPase superfamily. Classic translation factor GTPase family. LepA subfamily.

Its subcellular location is the cell inner membrane. The enzyme catalyses GTP + H2O = GDP + phosphate + H(+). Functionally, required for accurate and efficient protein synthesis under certain stress conditions. May act as a fidelity factor of the translation reaction, by catalyzing a one-codon backward translocation of tRNAs on improperly translocated ribosomes. Back-translocation proceeds from a post-translocation (POST) complex to a pre-translocation (PRE) complex, thus giving elongation factor G a second chance to translocate the tRNAs correctly. Binds to ribosomes in a GTP-dependent manner. This is Elongation factor 4 from Mannheimia succiniciproducens (strain KCTC 0769BP / MBEL55E).